We begin with the raw amino-acid sequence, 128 residues long: Large ribosomal subunit protein bL17 (128 aa).

Belongs to the bacterial ribosomal protein bL17 family. As to quaternary structure, part of the 50S ribosomal subunit. Contacts protein L32.

In Streptococcus pneumoniae serotype 4 (strain ATCC BAA-334 / TIGR4), this protein is Large ribosomal subunit protein bL17.